Reading from the N-terminus, the 111-residue chain is Cornifelin homolog A (111 aa).

Belongs to the cornifelin family.

This chain is Cornifelin homolog A (cnfn-a), found in Xenopus laevis (African clawed frog).